We begin with the raw amino-acid sequence, 346 residues long: Phosphoribosylformylglycinamidine cyclo-ligase (346 aa).

Belongs to the AIR synthase family.

Its subcellular location is the cytoplasm. The catalysed reaction is 2-formamido-N(1)-(5-O-phospho-beta-D-ribosyl)acetamidine + ATP = 5-amino-1-(5-phospho-beta-D-ribosyl)imidazole + ADP + phosphate + H(+). The protein operates within purine metabolism; IMP biosynthesis via de novo pathway; 5-amino-1-(5-phospho-D-ribosyl)imidazole from N(2)-formyl-N(1)-(5-phospho-D-ribosyl)glycinamide: step 2/2. The protein is Phosphoribosylformylglycinamidine cyclo-ligase of Photorhabdus laumondii subsp. laumondii (strain DSM 15139 / CIP 105565 / TT01) (Photorhabdus luminescens subsp. laumondii).